Here is a 421-residue protein sequence, read N- to C-terminus: Enolase (421 aa).

Gln-161 contacts (2R)-2-phosphoglycerate. The Proton donor role is filled by Glu-203. Mg(2+) is bound by residues Asp-240, Glu-283, and Asp-310. (2R)-2-phosphoglycerate contacts are provided by Lys-335, Arg-364, Ser-365, and Lys-386. Residue Lys-335 is the Proton acceptor of the active site.

This sequence belongs to the enolase family. Mg(2+) serves as cofactor.

The protein resides in the cytoplasm. Its subcellular location is the secreted. It localises to the cell surface. It catalyses the reaction (2R)-2-phosphoglycerate = phosphoenolpyruvate + H2O. It participates in carbohydrate degradation; glycolysis; pyruvate from D-glyceraldehyde 3-phosphate: step 4/5. Functionally, catalyzes the reversible conversion of 2-phosphoglycerate (2-PG) into phosphoenolpyruvate (PEP). It is essential for the degradation of carbohydrates via glycolysis. The polypeptide is Enolase (Sulfurimonas denitrificans (strain ATCC 33889 / DSM 1251) (Thiomicrospira denitrificans (strain ATCC 33889 / DSM 1251))).